The following is a 97-amino-acid chain: Large ribosomal subunit protein uL23 (97 aa).

Belongs to the universal ribosomal protein uL23 family. As to quaternary structure, part of the 50S ribosomal subunit. Contacts protein L29, and trigger factor when it is bound to the ribosome.

Its function is as follows. One of the early assembly proteins it binds 23S rRNA. One of the proteins that surrounds the polypeptide exit tunnel on the outside of the ribosome. Forms the main docking site for trigger factor binding to the ribosome. This Myxococcus xanthus (strain DK1622) protein is Large ribosomal subunit protein uL23.